Reading from the N-terminus, the 798-residue chain is Protocadherin beta-14 (798 aa).

The signal sequence occupies residues 1-26 (MEIRGALDLRKRQVLIFLVLLGLSRA). The Extracellular portion of the chain corresponds to 27 to 686 (GTESAHYSVA…APAQAQADSL (660 aa)). 5 consecutive Cadherin domains span residues 35–133 (VAEE…SPTF), 138–242 (ILIK…APEF), 247–347 (YEVQ…PPEV), 352–451 (ITKR…APAF), and 456–561 (YTLF…SPFV). The cysteines at positions 96 and 102 are disulfide-linked. Asn-169 carries an N-linked (GlcNAc...) asparagine glycan. 3 N-linked (GlcNAc...) asparagine glycosylation sites follow: Asn-359, Asn-418, and Asn-436. N-linked (GlcNAc...) asparagine glycosylation occurs at Asn-567. The Cadherin 6 domain occupies 568 to 671 (GSAPCTELVP…LVDGFSQPYL (104 aa)). The chain crosses the membrane as a helical span at residues 687–711 (TVYLVVALASVSSLFLFSVLLFVAV). Topologically, residues 712–798 (RLCRRSRAAS…FRNSFGLNIQ (87 aa)) are cytoplasmic.

Its subcellular location is the cell membrane. Its function is as follows. Potential calcium-dependent cell-adhesion protein. May be involved in the establishment and maintenance of specific neuronal connections in the brain. The sequence is that of Protocadherin beta-14 (PCDHB14) from Pan troglodytes (Chimpanzee).